A 323-amino-acid polypeptide reads, in one-letter code: Large ribosomal subunit protein uL10 (323 aa).

A disordered region spans residues 296-323; the sequence is AAPAAPSAAAKEEPEESDEDDFGMGGLF. Residues 308 to 317 show a composition bias toward acidic residues; that stretch reads EPEESDEDDF.

This sequence belongs to the universal ribosomal protein uL10 family. As to quaternary structure, P0 forms a pentameric complex by interaction with dimers of P1 and P2. Phosphorylated.

In terms of biological role, ribosomal protein P0 is the functional equivalent of E.coli protein L10. The sequence is that of Large ribosomal subunit protein uL10 (LIPO-A) from Leishmania infantum.